The following is a 572-amino-acid chain: Phosphoglucomutase-2 (572 aa).

Substrate is bound by residues Thr23, Arg27, 126–127, and Lys140; that span reads SH. Ser126 serves as the catalytic Phosphoserine intermediate. Ser126 provides a ligand contact to Mg(2+). Mg(2+)-binding residues include Asp308, Asp310, and Asp312. Substrate is bound by residues 312–313, Thr373, 392–394, Lys405, and Arg527; these read DR and EES.

Belongs to the phosphohexose mutase family. Mg(2+) is required as a cofactor. Post-translationally, phosphorylated via a calcium-dependent protein kinase.

The protein localises to the cytoplasm. The catalysed reaction is alpha-D-glucose 1-phosphate = alpha-D-glucose 6-phosphate. In terms of biological role, may be involved in membrane fusion in exocytosis. This Paramecium tetraurelia protein is Phosphoglucomutase-2 (pp63-2).